Reading from the N-terminus, the 799-residue chain is Ribosome-releasing factor 2, mitochondrial (799 aa).

The region spanning 19 to 306 is the tr-type G domain; the sequence is SKIRNIGIIA…AVVNYLPSPL (288 aa). GTP-binding positions include 28 to 35, 93 to 97, and 145 to 148; these read AHIDAGKT, DTPGH, and NKMD.

Belongs to the TRAFAC class translation factor GTPase superfamily. Classic translation factor GTPase family. EF-G/EF-2 subfamily.

Its subcellular location is the mitochondrion. In terms of biological role, mitochondrial GTPase that mediates the disassembly of ribosomes from messenger RNA at the termination of mitochondrial protein biosynthesis. Not involved in the GTP-dependent ribosomal translocation step during translation elongation. The polypeptide is Ribosome-releasing factor 2, mitochondrial (Vanderwaltozyma polyspora (strain ATCC 22028 / DSM 70294 / BCRC 21397 / CBS 2163 / NBRC 10782 / NRRL Y-8283 / UCD 57-17) (Kluyveromyces polysporus)).